The primary structure comprises 344 residues: Probable dual-specificity RNA methyltransferase RlmN (344 aa).

Residue Glu-89 is the Proton acceptor of the active site. Residues 95–329 form the Radical SAM core domain; that stretch reads TDQRLTVCVS…VSLRASRGLD (235 aa). Cys-102 and Cys-334 are joined by a disulfide. Positions 109, 113, and 116 each coordinate [4Fe-4S] cluster. Residues 156 to 157, Ser-186, 215 to 217, and Asn-291 each bind S-adenosyl-L-methionine; these read GE and SLH. Cys-334 functions as the S-methylcysteine intermediate in the catalytic mechanism.

This sequence belongs to the radical SAM superfamily. RlmN family. [4Fe-4S] cluster is required as a cofactor.

Its subcellular location is the cytoplasm. The catalysed reaction is adenosine(2503) in 23S rRNA + 2 reduced [2Fe-2S]-[ferredoxin] + 2 S-adenosyl-L-methionine = 2-methyladenosine(2503) in 23S rRNA + 5'-deoxyadenosine + L-methionine + 2 oxidized [2Fe-2S]-[ferredoxin] + S-adenosyl-L-homocysteine. It carries out the reaction adenosine(37) in tRNA + 2 reduced [2Fe-2S]-[ferredoxin] + 2 S-adenosyl-L-methionine = 2-methyladenosine(37) in tRNA + 5'-deoxyadenosine + L-methionine + 2 oxidized [2Fe-2S]-[ferredoxin] + S-adenosyl-L-homocysteine. Its function is as follows. Specifically methylates position 2 of adenine 2503 in 23S rRNA and position 2 of adenine 37 in tRNAs. This Parasynechococcus marenigrum (strain WH8102) protein is Probable dual-specificity RNA methyltransferase RlmN.